The primary structure comprises 91 residues: Small ribosomal subunit protein uS19 (91 aa).

Belongs to the universal ribosomal protein uS19 family.

In terms of biological role, protein S19 forms a complex with S13 that binds strongly to the 16S ribosomal RNA. In Erythrobacter litoralis (strain HTCC2594), this protein is Small ribosomal subunit protein uS19.